The primary structure comprises 303 residues: Putative S-adenosyl-L-methionine-dependent methyltransferase MSMEG_1479/MSMEI_1443 (303 aa).

Residues Asp-130 and 159–160 (DL) contribute to the S-adenosyl-L-methionine site.

It belongs to the UPF0677 family.

Exhibits S-adenosyl-L-methionine-dependent methyltransferase activity. The polypeptide is Putative S-adenosyl-L-methionine-dependent methyltransferase MSMEG_1479/MSMEI_1443 (Mycolicibacterium smegmatis (strain ATCC 700084 / mc(2)155) (Mycobacterium smegmatis)).